The following is a 274-amino-acid chain: MQFSKMHGLGNDFMVVDAVTQNVFFSPELIRRLADRHLGVGFDQLLVVEPPYDPELDFHYRIFNTDGSEVAQCGNGARCFARFVRLKGLTNKRDIRVSTANGRMVLTVTDDDLVRVNMGEPNFEPSAVPFRANKVEKTYIMRAAEQTILCGVVSMGNPHCVIQVDDVDTAAVETLGPVLESHERFPERANIGFMQVVKREHIRLRVYERGAGETQACGSGACAAVAVGIQQGLLAEEVRVELPGGRLDIAWKGPGHPLYMTGPAVHVYDGFIHL.

Residues asparagine 11, glutamine 44, and asparagine 64 each coordinate substrate. The active-site Proton donor is the cysteine 73. Substrate contacts are provided by residues 74-75 (GN), asparagine 157, asparagine 190, and 208-209 (ER). The active-site Proton acceptor is cysteine 217. 218 to 219 (GS) lines the substrate pocket.

The protein belongs to the diaminopimelate epimerase family. In terms of assembly, homodimer.

The protein localises to the cytoplasm. The enzyme catalyses (2S,6S)-2,6-diaminopimelate = meso-2,6-diaminopimelate. The protein operates within amino-acid biosynthesis; L-lysine biosynthesis via DAP pathway; DL-2,6-diaminopimelate from LL-2,6-diaminopimelate: step 1/1. Catalyzes the stereoinversion of LL-2,6-diaminopimelate (L,L-DAP) to meso-diaminopimelate (meso-DAP), a precursor of L-lysine and an essential component of the bacterial peptidoglycan. In Escherichia coli O81 (strain ED1a), this protein is Diaminopimelate epimerase.